Consider the following 840-residue polypeptide: Lon protease homolog 2, peroxisomal (840 aa).

The 210-residue stretch at 13-222 (LPLLCTHDGV…KALPLLTRQI (210 aa)) folds into the Lon N-terminal domain. 375 to 382 (GPPGVGKT) is an ATP binding site. The interval 583-606 (QKVSRSEAPTEQHAEQNTDSKVED) is disordered. Positions 584–606 (KVSRSEAPTEQHAEQNTDSKVED) are enriched in basic and acidic residues. Residues 641–825 (LTLPGVAIGL…DEVLNAAFDG (185 aa)) form the Lon proteolytic domain. Residues Ser731 and Lys774 contribute to the active site. Residues 838–840 (SKL) carry the Microbody targeting signal motif.

Belongs to the peptidase S16 family.

It localises to the peroxisome matrix. The enzyme catalyses Hydrolysis of proteins in presence of ATP.. Its function is as follows. ATP-dependent serine protease that mediates the selective degradation of misfolded and unassembled polypeptides in the peroxisomal matrix. Necessary for type 2 peroxisome targeting signal (PTS2)-containing protein processing and facilitates peroxisome matrix protein import. This chain is Lon protease homolog 2, peroxisomal (lonp2), found in Danio rerio (Zebrafish).